The sequence spans 1407 residues: DNA-directed RNA polymerase subunit beta' (1407 aa).

Positions 70, 72, 85, and 88 each coordinate Zn(2+). Asp-460, Asp-462, and Asp-464 together coordinate Mg(2+). The Zn(2+) site is built by Cys-814, Cys-888, Cys-895, and Cys-898. The residue at position 972 (Lys-972) is an N6-acetyllysine.

This sequence belongs to the RNA polymerase beta' chain family. The RNAP catalytic core consists of 2 alpha, 1 beta, 1 beta' and 1 omega subunit. When a sigma factor is associated with the core the holoenzyme is formed, which can initiate transcription. It depends on Mg(2+) as a cofactor. Requires Zn(2+) as cofactor.

It catalyses the reaction RNA(n) + a ribonucleoside 5'-triphosphate = RNA(n+1) + diphosphate. DNA-dependent RNA polymerase catalyzes the transcription of DNA into RNA using the four ribonucleoside triphosphates as substrates. In Escherichia coli O1:K1 / APEC, this protein is DNA-directed RNA polymerase subunit beta'.